A 177-amino-acid chain; its full sequence is MESCPSVKNILVLDSEGKRVAVKYYSDDWPSLSSKQAFEKSVFAKTQKTSARTEAEIVMFDSYFVVYKFIQDLHFFVTGGDEENELILASVLQGFSEAIDYLLRNKVHRRAALENLDLIFLCLDEVVDGGIVLETDAKAILEKVSGHGLEGSGSLTEQKLSSALATAREHFARSIFS.

Belongs to the adaptor complexes small subunit family. Oligomeric complex that consists of at least the alpha, beta, beta', gamma, delta, epsilon and zeta subunits.

It is found in the cytoplasm. The protein resides in the golgi apparatus membrane. It localises to the cytoplasmic vesicle. Its subcellular location is the COPI-coated vesicle membrane. Functionally, the coatomer is a cytosolic protein complex that binds to dilysine motifs and reversibly associates with Golgi non-clathrin-coated vesicles, which further mediate biosynthetic protein transport from the ER, via the Golgi up to the trans Golgi network. Coatomer complex is required for budding from Golgi membranes, and is essential for the retrograde Golgi-to-ER transport of dilysine-tagged proteins. The zeta subunit may be involved in regulating the coat assembly and, hence, the rate of biosynthetic protein transport due to its association-dissociation properties with the coatomer complex. This chain is Coatomer subunit zeta-3, found in Oryza sativa subsp. japonica (Rice).